The chain runs to 875 residues: Neurotrypsin (875 aa).

The signal sequence occupies residues 1 to 20 (MTLARFVLALMLGALPEVVG). A glycan (N-linked (GlcNAc...) asparagine) is linked at Asn-26. The tract at residues 29-88 (LHHSHRHSPPAGPHYPYYLPTQQRPPRTRPPPPLPRFPRPPRALPAQRPHALQAGHTPRP) is disordered. A compositionally biased stretch (pro residues) spans 56–71 (TRPPPPLPRFPRPPRA). A Kringle domain is found at 93 to 165 (CPAGEPWVSV…GKVDWGYCDC (73 aa)). 20 cysteine pairs are disulfide-bonded: Cys-93-Cys-165, Cys-109-Cys-149, Cys-138-Cys-163, Cys-195-Cys-259, Cys-208-Cys-269, Cys-239-Cys-249, Cys-305-Cys-369, Cys-318-Cys-379, Cys-349-Cys-359, Cys-412-Cys-475, Cys-425-Cys-485, Cys-455-Cys-465, Cys-525-Cys-589, Cys-538-Cys-599, Cys-569-Cys-579, Cys-619-Cys-750, Cys-661-Cys-677, Cys-765-Cys-831, Cys-794-Cys-808, and Cys-821-Cys-850. 4 SRCR domains span residues 170 to 271 (VRLR…TCSF), 280 to 381 (IRLA…SCTP), 387 to 487 (IRLA…ACYP), and 500 to 601 (VRLM…ICDY). The interval 619–630 (CGLRLLHRRQKR) is zymogen activation region. In terms of domain architecture, Peptidase S1 spans 631–874 (IIGGKNSLRG…FVPWIKSVTK (244 aa)). The active-site Charge relay system is His-676. A glycan (N-linked (GlcNAc...) asparagine) is linked at Asn-683. Residue Asp-726 is the Charge relay system of the active site. The active-site Charge relay system is the Ser-825.

It belongs to the peptidase S1 family. As to expression, brain and Leydig cells of the testis.

The protein resides in the secreted. Its function is as follows. Plays a role in neuronal plasticity and the proteolytic action may subserve structural reorganizations associated with learning and memory operations. This is Neurotrypsin (PRSS12) from Homo sapiens (Human).